A 663-amino-acid chain; its full sequence is Guanine nucleotide exchange factor subunit RGP1 (663 aa).

Phosphoserine is present on residues serine 351, serine 354, serine 357, serine 363, serine 364, and serine 370. The interval 412–443 (GKDEDSSDPEPNDSHFSNEMVTSAESSLRSDA) is disordered. Residues 426 to 440 (HFSNEMVTSAESSLR) are compositionally biased toward polar residues.

The protein belongs to the RGP1 family. In terms of assembly, forms a complex with RIC1.

The protein resides in the golgi apparatus. In terms of biological role, the RIC1-RGP1 complex acts as a guanine nucleotide exchange factor (GEF), which activates YPT6 by exchanging bound GDP for free GTP. It is thereby required for efficient fusion of endosome-derived vesicles with the Golgi. The RIC1-RGP1 participates in the recycling of SNC1, presumably by mediating fusion of endosomal vesicles with the Golgi compartment. Functionally, required for proper mitotic growth. The chain is Guanine nucleotide exchange factor subunit RGP1 from Saccharomyces cerevisiae (strain ATCC 204508 / S288c) (Baker's yeast).